Consider the following 79-residue polypeptide: D-alanyl carrier protein (79 aa).

Residues 1 to 77 (MSTKETVIDL…KIIQGIEELQ (77 aa)) enclose the Carrier domain. S35 is modified (O-(pantetheine 4'-phosphoryl)serine).

Belongs to the DltC family. 4'-phosphopantetheine is transferred from CoA to a specific serine of apo-DCP.

The protein localises to the cytoplasm. Its pathway is cell wall biogenesis; lipoteichoic acid biosynthesis. Functionally, carrier protein involved in the D-alanylation of lipoteichoic acid (LTA). The loading of thioester-linked D-alanine onto DltC is catalyzed by D-alanine--D-alanyl carrier protein ligase DltA. The DltC-carried D-alanyl group is further transferred to cell membrane phosphatidylglycerol (PG) by forming an ester bond, probably catalyzed by DltD. D-alanylation of LTA plays an important role in modulating the properties of the cell wall in Gram-positive bacteria, influencing the net charge of the cell wall. The protein is D-alanyl carrier protein of Streptococcus equi subsp. equi (strain 4047).